A 157-amino-acid chain; its full sequence is MKTEARDGGSEWRWVAIFELFLRLAAIVSTSVAVYAAMGKIFVVAVNGVACFYLLMSLPVSIFNIMRPHAYPANRVFLNIMDMVMVALVTAGALAAGIVYLVEKAGNARASWVSVWSQFDSSSCFAVLALILHVLLSGVILYKQALNIKFKKLDSVD.

Residues 1–13 (MKTEARDGGSEWR) are Cytoplasmic-facing. The chain crosses the membrane as a helical span at residues 14 to 34 (WVAIFELFLRLAAIVSTSVAV). Residues 35 to 40 (YAAMGK) lie on the Extracellular side of the membrane. The chain crosses the membrane as a helical span at residues 41-61 (IFVVAVNGVACFYLLMSLPVS). The Cytoplasmic portion of the chain corresponds to 62 to 82 (IFNIMRPHAYPANRVFLNIMD). The chain crosses the membrane as a helical span at residues 83 to 103 (MVMVALVTAGALAAGIVYLVE). Residues 104–121 (KAGNARASWVSVWSQFDS) are Extracellular-facing. Residues 122–142 (SSCFAVLALILHVLLSGVILY) form a helical membrane-spanning segment. Residues 143–157 (KQALNIKFKKLDSVD) lie on the Cytoplasmic side of the membrane.

The protein belongs to the Casparian strip membrane proteins (CASP) family. Homodimer and heterodimers.

Its subcellular location is the cell membrane. This is CASP-like protein 1 from Picea sitchensis (Sitka spruce).